The following is a 364-amino-acid chain: Mannose-1-phosphate guanyltransferase (364 aa).

This sequence belongs to the transferase hexapeptide repeat family.

It localises to the cytoplasm. It carries out the reaction alpha-D-mannose 1-phosphate + GTP + H(+) = GDP-alpha-D-mannose + diphosphate. The protein operates within nucleotide-sugar biosynthesis; GDP-alpha-D-mannose biosynthesis; GDP-alpha-D-mannose from alpha-D-mannose 1-phosphate (GTP route): step 1/1. Involved in cell wall synthesis where it is required for glycosylation. Involved in cell cycle progression through cell-size checkpoint. This is Mannose-1-phosphate guanyltransferase (mpg1) from Aspergillus oryzae (strain ATCC 42149 / RIB 40) (Yellow koji mold).